The primary structure comprises 193 residues: Phosphatidylglycerophosphatase and protein-tyrosine phosphatase 1 (193 aa).

Residues 1-31 constitute a mitochondrion transit peptide; the sequence is MAASAWLEAGLARVLFYPTLLYTVFRGRVGG. The Tyrosine-protein phosphatase domain occupies 37–188; it reads WYHRIDHTVL…LKEFHKEIAA (152 aa). K85 carries the post-translational modification N6-succinyllysine. Catalysis depends on C132, which acts as the Phosphocysteine intermediate.

It belongs to the protein-tyrosine phosphatase family. Non-receptor class dual specificity subfamily. Interacts with STYXL1; the interaction inhibits PTPMT1 catalytic activity. Expressed in liver and in pancreatic beta cells.

It localises to the mitochondrion inner membrane. The catalysed reaction is O-phospho-L-tyrosyl-[protein] + H2O = L-tyrosyl-[protein] + phosphate. It carries out the reaction O-phospho-L-seryl-[protein] + H2O = L-seryl-[protein] + phosphate. The enzyme catalyses O-phospho-L-threonyl-[protein] + H2O = L-threonyl-[protein] + phosphate. It catalyses the reaction a 1,2-diacyl-sn-glycero-3-phospho-(1'-sn-glycero-3'-phosphate) + H2O = a 1,2-diacyl-sn-glycero-3-phospho-(1'-sn-glycerol) + phosphate. The catalysed reaction is 1,2-di-(9Z-octadecenoyl)-sn-glycero-3-phospho-(1'-sn-glycerol-3'-phosphate) + H2O = 1,2-di-(9Z-octadecenoyl)-sn-glycero-3-phospho-(1'-sn-glycerol) + phosphate. It carries out the reaction 1,2-dioctanoyl-sn-glycero-3-phospho-(1D-myo-inositol-5-phosphate) + H2O = 1,2-dioctanoyl-sn-glycero-3-phospho-(1D-myo-inositol) + phosphate. The enzyme catalyses a 1-acyl-2-hexanoyl-sn-glycero-3-phospho-(1D-myo-inositol-5-phosphate) + H2O = a 1-acyl-2-hexanoyl-sn-glycero-3-phospho-(1D-myo-inositol) + phosphate. It catalyses the reaction 1,2-dibutyryl-sn-glycero-3-phospho-(1D-myo-inositol-5-phosphate) + H2O = 1,2-dibutyryl-sn-glycero-3-phospho-(1D-myo-inositol) + phosphate. The protein operates within phospholipid metabolism; phosphatidylglycerol biosynthesis; phosphatidylglycerol from CDP-diacylglycerol: step 2/2. In terms of biological role, lipid phosphatase which dephosphorylates phosphatidylglycerophosphate (PGP) to phosphatidylglycerol (PG). PGP is an essential intermediate in the biosynthetic pathway of cardiolipin, a mitochondrial-specific phospholipid regulating the membrane integrity and activities of the organelle. Has also been shown to display phosphatase activity toward phosphoprotein substrates, specifically mediates dephosphorylation of mitochondrial proteins, thereby playing an essential role in ATP production. Has probably a preference for proteins phosphorylated on Ser and/or Thr residues compared to proteins phosphorylated on Tyr residues. Probably involved in regulation of insulin secretion in pancreatic beta cells. May prevent intrinsic apoptosis, probably by regulating mitochondrial membrane integrity. This Rattus norvegicus (Rat) protein is Phosphatidylglycerophosphatase and protein-tyrosine phosphatase 1.